Here is a 207-residue protein sequence, read N- to C-terminus: ATP-dependent Clp protease proteolytic subunit (207 aa).

Serine 111 (nucleophile) is an active-site residue. Histidine 136 is a catalytic residue.

It belongs to the peptidase S14 family. Fourteen ClpP subunits assemble into 2 heptameric rings which stack back to back to give a disk-like structure with a central cavity, resembling the structure of eukaryotic proteasomes.

The protein localises to the cytoplasm. It carries out the reaction Hydrolysis of proteins to small peptides in the presence of ATP and magnesium. alpha-casein is the usual test substrate. In the absence of ATP, only oligopeptides shorter than five residues are hydrolyzed (such as succinyl-Leu-Tyr-|-NHMec, and Leu-Tyr-Leu-|-Tyr-Trp, in which cleavage of the -Tyr-|-Leu- and -Tyr-|-Trp bonds also occurs).. Its function is as follows. Cleaves peptides in various proteins in a process that requires ATP hydrolysis. Has a chymotrypsin-like activity. Plays a major role in the degradation of misfolded proteins. The polypeptide is ATP-dependent Clp protease proteolytic subunit (Burkholderia mallei (strain ATCC 23344)).